Consider the following 104-residue polypeptide: MKVHKGDTVLVISGKDKGAKGKVIQAYPKENRVLVEGVNRIKKHVANSANQRGASSGGIVTQEAPIHVSNVMVVDSDGKPTRIGYRTDENGKRVRISRRNGKDI.

Residues 82–92 (RIGYRTDENGK) are compositionally biased toward basic and acidic residues. The interval 82 to 104 (RIGYRTDENGKRVRISRRNGKDI) is disordered. A compositionally biased stretch (basic residues) spans 93–104 (RVRISRRNGKDI).

This sequence belongs to the universal ribosomal protein uL24 family. In terms of assembly, part of the 50S ribosomal subunit.

In terms of biological role, one of two assembly initiator proteins, it binds directly to the 5'-end of the 23S rRNA, where it nucleates assembly of the 50S subunit. Functionally, one of the proteins that surrounds the polypeptide exit tunnel on the outside of the subunit. The protein is Large ribosomal subunit protein uL24 of Nocardia farcinica (strain IFM 10152).